The chain runs to 196 residues: Probable malonic semialdehyde reductase RutE (196 aa).

It belongs to the nitroreductase family. HadB/RutE subfamily. It depends on FMN as a cofactor.

The catalysed reaction is 3-hydroxypropanoate + NADP(+) = 3-oxopropanoate + NADPH + H(+). In terms of biological role, may reduce toxic product malonic semialdehyde to 3-hydroxypropionic acid, which is excreted. This Shigella flexneri serotype 5b (strain 8401) protein is Probable malonic semialdehyde reductase RutE.